We begin with the raw amino-acid sequence, 87 residues long: MARVTVEDCLEHVDNRFELVMLSTKRARQLATGGKEPKVAWENDKPTVVALREIAEGLIDYAAIAEAEIVEDEPLFAAFEDESNEAV.

It belongs to the RNA polymerase subunit omega family. The RNAP catalytic core consists of 2 alpha, 1 beta, 1 beta' and 1 omega subunit. When a sigma factor is associated with the core the holoenzyme is formed, which can initiate transcription.

It catalyses the reaction RNA(n) + a ribonucleoside 5'-triphosphate = RNA(n+1) + diphosphate. In terms of biological role, promotes RNA polymerase assembly. Latches the N- and C-terminal regions of the beta' subunit thereby facilitating its interaction with the beta and alpha subunits. The sequence is that of DNA-directed RNA polymerase subunit omega from Pseudomonas fluorescens (strain ATCC BAA-477 / NRRL B-23932 / Pf-5).